The sequence spans 629 residues: 1-deoxy-D-xylulose-5-phosphate synthase (629 aa).

Thiamine diphosphate is bound by residues H78 and 119–121; that span reads AHS. D150 is a binding site for Mg(2+). Thiamine diphosphate-binding positions include 151-152, N179, Y286, and E368; that span reads GA. N179 contacts Mg(2+).

Belongs to the transketolase family. DXPS subfamily. As to quaternary structure, homodimer. Mg(2+) serves as cofactor. It depends on thiamine diphosphate as a cofactor.

The catalysed reaction is D-glyceraldehyde 3-phosphate + pyruvate + H(+) = 1-deoxy-D-xylulose 5-phosphate + CO2. Its pathway is metabolic intermediate biosynthesis; 1-deoxy-D-xylulose 5-phosphate biosynthesis; 1-deoxy-D-xylulose 5-phosphate from D-glyceraldehyde 3-phosphate and pyruvate: step 1/1. In terms of biological role, catalyzes the acyloin condensation reaction between C atoms 2 and 3 of pyruvate and glyceraldehyde 3-phosphate to yield 1-deoxy-D-xylulose-5-phosphate (DXP). This is 1-deoxy-D-xylulose-5-phosphate synthase from Acidovorax sp. (strain JS42).